Here is a 453-residue protein sequence, read N- to C-terminus: F-box protein SKIP14 (453 aa).

Residues 34–104 (RKNTGGDASS…NRQQLFAGLS (71 aa)) enclose the F-box; degenerate domain.

As to quaternary structure, part of a SCF (ASK-cullin-F-box) protein ligase complex. Interacts with CUL1, SKP1A/ASK1 and SPK1B/ASK2.

It functions in the pathway protein modification; protein ubiquitination. Functionally, component of SCF(ASK-cullin-F-box) E3 ubiquitin ligase complexes, which may mediate the ubiquitination and subsequent proteasomal degradation of target proteins. This chain is F-box protein SKIP14 (SKIP14), found in Arabidopsis thaliana (Mouse-ear cress).